Consider the following 874-residue polypeptide: Envelope glycoprotein B (874 aa).

Positions 1–25 are cleaved as a signal peptide; that stretch reads MGVGGGPRVVLCLWCVAALLCQGVA. Residues 26-727 are Virion surface-facing; the sequence is QEVVAETTTP…SGVISFFKNP (702 aa). Disulfide bonds link cysteine 59–cysteine 523, cysteine 77–cysteine 479, cysteine 149–cysteine 214, cysteine 306–cysteine 353, and cysteine 546–cysteine 583. Residues 116 to 122 are involved in fusion and/or binding to host membrane; it reads IYKGWSE. The N-linked (GlcNAc...) asparagine; by host glycan is linked to asparagine 171. Residues 200–208 form an involved in fusion and/or binding to host membrane region; sequence RNLLWSYTT. N-linked (GlcNAc...) asparagine; by host glycosylation is found at asparagine 247, asparagine 281, asparagine 302, asparagine 323, asparagine 348, asparagine 356, asparagine 376, asparagine 409, asparagine 412, asparagine 444, asparagine 558, asparagine 610, and asparagine 624. The disordered stretch occupies residues 412–450; it reads NATASPTSTPTTSPRRRRRDTSSVSGGGNNGDNSTKEES. Residues 673–725 are hydrophobic membrane proximal region; the sequence is LDDSIDHGRDSFIQTLGDIMQDLGTIGKVVVNVASGVFSLFGSIVSGVISFFK. The helical transmembrane segment at 728–748 threads the bilayer; the sequence is FGGMLLIVLIIAGVVVVYLFM. Topologically, residues 749–874 are intravirion; the sequence is TRSRSIYSAP…VEAGTADTGV (126 aa). A disordered region spans residues 830 to 874; it reads RRGGGGYQRLQRDGSDDEGDYEPLRRQDGGYDDVDVEAGTADTGV. Positions 836 to 839 match the Internalization motif motif; the sequence is YQRL.

This sequence belongs to the herpesviridae glycoprotein B family. Homotrimer; disulfide-linked. Binds to heparan sulfate proteoglycans. Interacts with gH/gL heterodimer. A proteolytic cleavage by host furin generates two subunits that remain linked by disulfide bonds.

The protein localises to the virion membrane. Its subcellular location is the host cell membrane. It is found in the host endosome membrane. The protein resides in the host Golgi apparatus membrane. Its function is as follows. Envelope glycoprotein that forms spikes at the surface of virion envelope. Essential for the initial attachment to heparan sulfate moieties of the host cell surface proteoglycans. Involved in fusion of viral and cellular membranes leading to virus entry into the host cell. Following initial binding to its host receptors, membrane fusion is mediated by the fusion machinery composed at least of gB and the heterodimer gH/gL. May be involved in the fusion between the virion envelope and the outer nuclear membrane during virion egress. This chain is Envelope glycoprotein B, found in Equus caballus (Horse).